The primary structure comprises 325 residues: NADH-quinone oxidoreductase subunit H (325 aa).

8 helical membrane-spanning segments follow: residues 11 to 31 (ILLT…CGAF), 81 to 101 (FIFT…FAIV), 114 to 134 (IGIL…LFAG), 154 to 174 (VSYE…AGSF), 186 to 206 (MWNI…GVAV), 237 to 257 (FFVG…TLFF), 265 to 285 (LPSF…FILI), and 304 to 324 (ICLP…LYNA).

Belongs to the complex I subunit 1 family. NDH-1 is composed of 13 different subunits. Subunits NuoA, H, J, K, L, M, N constitute the membrane sector of the complex.

It is found in the cell inner membrane. The catalysed reaction is a quinone + NADH + 5 H(+)(in) = a quinol + NAD(+) + 4 H(+)(out). NDH-1 shuttles electrons from NADH, via FMN and iron-sulfur (Fe-S) centers, to quinones in the respiratory chain. The immediate electron acceptor for the enzyme in this species is believed to be ubiquinone. Couples the redox reaction to proton translocation (for every two electrons transferred, four hydrogen ions are translocated across the cytoplasmic membrane), and thus conserves the redox energy in a proton gradient. This subunit may bind ubiquinone. This chain is NADH-quinone oxidoreductase subunit H, found in Proteus mirabilis (strain HI4320).